Reading from the N-terminus, the 455-residue chain is Venom prothrombin activator trocarin-D (455 aa).

The first 20 residues, 1–20 (MAPQLLLCLILTFLWSLPEA), serve as a signal peptide directing secretion. The propeptide occupies 21-40 (ESNVFLKSKVANRFLQRTKR). Residues 41–86 (SNSLFEEIRPGNIERECIEEKCSKEEAREVFEDNEKTETFWNVYVD) form the Gla domain. Residues glutamate 46, glutamate 47, glutamate 54, glutamate 56, glutamate 59, glutamate 60, glutamate 65, glutamate 66, glutamate 69, glutamate 72, and glutamate 75 each carry the 4-carboxyglutamate modification. Residues cysteine 57 and cysteine 62 are joined by a disulfide bond. Residues 86–122 (DGDQCSSNPCHYRGTCKDGIGSYTCTCLPNYEGKNCE) form the EGF-like 1; calcium-binding domain. 11 disulfide bridges follow: cysteine 90–cysteine 101, cysteine 95–cysteine 110, cysteine 112–cysteine 121, cysteine 129–cysteine 140, cysteine 136–cysteine 149, cysteine 151–cysteine 164, cysteine 172–cysteine 328, cysteine 216–cysteine 221, cysteine 236–cysteine 252, cysteine 376–cysteine 390, and cysteine 401–cysteine 429. A glycan (O-linked (Hex...) serine) is linked at serine 92. The region spanning 129-164 (CRVDNGNCWHFCKRVQSETQCSCAESYRLGVDGHSC) is the EGF-like 2 domain. Positions 182 to 209 (REASLPDFVQSQKATLLKKSDNPSPDIR) are cleaved as a propeptide — activation peptide. The Peptidase S1 domain occupies 210-453 (IVNGMDCKLG…FIPWIKKIMS (244 aa)). Histidine 251 (charge relay system) is an active-site residue. The N-linked (GlcNAc...) asparagine glycan is linked to asparagine 254. Aspartate 308 serves as the catalytic Charge relay system. The active-site Charge relay system is the serine 405.

This sequence belongs to the peptidase S1 family. Snake venom subfamily. In terms of assembly, heterodimer of a light chain and a heavy chain; disulfide-linked. Post-translationally, gamma-carboxyglutamate residues are formed by vitamin K dependent carboxylation. These residues are essential for the binding of calcium. In terms of processing, the O-linked saccharides at Ser-92 are a mixture of Xyl-Glc, and Glc along with smaller amounts of Xyl-GlcNAc, GlcNAc, Gal, GalNAc, Xyl-Gal, and Xyl-GalNAc, suggesting that the glycosyl transferases responsible for this modification are non-specific. The N-linked carbohydrate at Asn-254 (Asn-45 of the heavy chain) is a sialylated and diantennary oligosaccharide. Expressed by the venom gland.

It localises to the secreted. It catalyses the reaction Selective cleavage of Arg-|-Thr and then Arg-|-Ile bonds in prothrombin to form thrombin.. Its activity is regulated as follows. Activated by calcium and phospholipids. Snake prothrombin activator that attacks the hemostatic system of prey. This protein is functionally similar to blood coagulation factor Xa. Induces cyanosis and death in mice at 1 mg/kg body weight during blood clotting. In Tropidechis carinatus (Australian rough-scaled snake), this protein is Venom prothrombin activator trocarin-D.